Reading from the N-terminus, the 438-residue chain is Xylose isomerase (438 aa).

Active-site residues include His-102 and Asp-105. Mg(2+) is bound by residues Glu-233, Glu-269, His-272, Asp-297, Asp-308, Asp-310, and Asp-340.

Belongs to the xylose isomerase family. Homotetramer. The cofactor is Mg(2+).

Its subcellular location is the cytoplasm. It carries out the reaction alpha-D-xylose = alpha-D-xylulofuranose. This is Xylose isomerase from Solibacter usitatus (strain Ellin6076).